The chain runs to 89 residues: Pyrin domain-containing protein 1 (89 aa).

The region spanning 1–89 (MGTKREAILK…EEAARLQRAA (89 aa)) is the Pyrin domain.

Interacts with PYCARD/ASC (via pyrin domain). In terms of processing, phosphorylated. Predominantly expressed in monocytes, macrophages and granulocytes.

The protein localises to the cytoplasm. Associates with PYCARD/ASC and modulates its ability to collaborate with MEFV/pyrin and NLRP3/cryopyrin in NF-kappa-B and pro-caspase-1 activation. Suppresses kinase activity of NF-kappa-B inhibitor kinase (IKK) complex, expression of NF-kappa-B inducible genes and inhibits NF-kappa-B activation by cytokines and LPS. The chain is Pyrin domain-containing protein 1 from Homo sapiens (Human).